We begin with the raw amino-acid sequence, 385 residues long: Cytochrome b (385 aa).

Helical transmembrane passes span 32 to 52 (MGSL…FMAM), 76 to 98 (WLLR…MHMA), 113 to 133 (VWII…LGYC), and 179 to 199 (FFAL…MHFM). Residues histidine 82 and histidine 96 each contribute to the heme b site. Residues histidine 183 and histidine 197 each contribute to the heme b site. Histidine 202 contributes to the a ubiquinone binding site. Helical transmembrane passes span 225–245 (FIFK…LFVF), 289–309 (LLGV…PLTD), 321–341 (ISKL…VLGS), and 348–368 (FVQM…IFVP).

The protein belongs to the cytochrome b family. Fungal cytochrome b-c1 complex contains 10 subunits; 3 respiratory subunits, 2 core proteins and 5 low-molecular weight proteins. Cytochrome b-c1 complex is a homodimer. Heme b is required as a cofactor.

It is found in the mitochondrion inner membrane. Its function is as follows. Component of the ubiquinol-cytochrome c reductase complex (complex III or cytochrome b-c1 complex) that is part of the mitochondrial respiratory chain. The b-c1 complex mediates electron transfer from ubiquinol to cytochrome c. Contributes to the generation of a proton gradient across the mitochondrial membrane that is then used for ATP synthesis. The chain is Cytochrome b (COB) from Monosporozyma servazzii (Yeast).